A 431-amino-acid polypeptide reads, in one-letter code: MTKSAELYEKAQQTIPGGVNSPVRAFNGVGGSPIFVERADGPLIFDADGKAYIDYVGSWGPMILGHNHVVIRDAVIAAAQRGLSFGAPTETEIKMAELVSEMVPSMEQLRMVSSGTEATMSAIRLARGFTGRDKILKFEGCYHGHADSLLVKAGSGALTLGQPSSPGVPADFAKLTLTATFNNLDSVREIFAANKGEIACIIVEPVAGNMNCIPPVEGFHEGLREICDQEGALLIFDEVMTGFRVAEGCAQAYYNIKPDLTCLGKVIGGGMPVGAFGGRKDVMQYIAPTGPVYQAGTLSGNPVAMAAGYACLNLLREEGNEKRLASKTKQLANGFKQLADKHGIPMLVHQVGGMFGFFFTDQETVTCYEDVTKCDVERFKRFFHLMLDHGVYLAPSAFEASFTSLAHGSKELDATLEAADRSLAIIAAESK.

Position 265 is an N6-(pyridoxal phosphate)lysine (Lys265).

The protein belongs to the class-III pyridoxal-phosphate-dependent aminotransferase family. HemL subfamily. In terms of assembly, homodimer. It depends on pyridoxal 5'-phosphate as a cofactor.

It is found in the cytoplasm. The enzyme catalyses (S)-4-amino-5-oxopentanoate = 5-aminolevulinate. It participates in porphyrin-containing compound metabolism; protoporphyrin-IX biosynthesis; 5-aminolevulinate from L-glutamyl-tRNA(Glu): step 2/2. This is Glutamate-1-semialdehyde 2,1-aminomutase from Vibrio atlanticus (strain LGP32) (Vibrio splendidus (strain Mel32)).